The primary structure comprises 140 residues: Putative pre-16S rRNA nuclease (140 aa).

It belongs to the YqgF nuclease family.

The protein resides in the cytoplasm. Its function is as follows. Could be a nuclease involved in processing of the 5'-end of pre-16S rRNA. This is Putative pre-16S rRNA nuclease from Vibrio cholerae serotype O1 (strain ATCC 39541 / Classical Ogawa 395 / O395).